The primary structure comprises 419 residues: eIF5-mimic protein 1 (419 aa).

Positions 1-22 are disordered; that stretch reads MNKHQKPVLTGQRFKTRKRDEK. K117 is subject to N6-acetyllysine. Residues 248 to 415 form the W2 domain; the sequence is VQQSLGTRKE…QNAEEESESE (168 aa). Residues S412, S414, and S419 each carry the phosphoserine modification.

It belongs to the BZW family. In terms of assembly, interacts with EIF3E, EIF2S2 and EIF3C. In terms of tissue distribution, expressed at high levels in heart, and at lower levels in skeletal muscle, spleen and lung. Expressed at low levels in brain regions where nascent and immature neurons are present.

Its subcellular location is the cytoplasm. Its function is as follows. Translation initiation regulator which represses non-AUG initiated translation and repeat-associated non-AUG (RAN) initiated translation by acting as a competitive inhibitor of eukaryotic translation initiation factor 5 (EIF5) function. Increases the accuracy of translation initiation by impeding EIF5-dependent translation from non-AUG codons by competing with it for interaction with EIF2S2 within the 43S pre-initiation complex (PIC) in an EIF3C-binding dependent manner. The sequence is that of eIF5-mimic protein 1 (Bzw2) from Rattus norvegicus (Rat).